We begin with the raw amino-acid sequence, 428 residues long: Enolase (428 aa).

(2R)-2-phosphoglycerate is bound at residue Gln163. Residue Glu205 is the Proton donor of the active site. Mg(2+) is bound by residues Asp242, Glu285, and Asp312. The (2R)-2-phosphoglycerate site is built by Lys337, Arg366, Ser367, and Lys388. Lys337 acts as the Proton acceptor in catalysis.

The protein belongs to the enolase family. Mg(2+) serves as cofactor.

Its subcellular location is the cytoplasm. It localises to the secreted. The protein localises to the cell surface. The enzyme catalyses (2R)-2-phosphoglycerate = phosphoenolpyruvate + H2O. The protein operates within carbohydrate degradation; glycolysis; pyruvate from D-glyceraldehyde 3-phosphate: step 4/5. In terms of biological role, catalyzes the reversible conversion of 2-phosphoglycerate (2-PG) into phosphoenolpyruvate (PEP). It is essential for the degradation of carbohydrates via glycolysis. This chain is Enolase, found in Moorella thermoacetica (strain ATCC 39073 / JCM 9320).